Consider the following 358-residue polypeptide: MKAATASIDLNALEHNLNQIKSKAPHCKVMSVVKANGYGHGLLHIAKHSKSSDAFGVARIEEALQLRAGGIVKPILLLEGFYSSGDLPILVTNNIQTVVHCEEQLSALENAELETPVVVWLKVDSGMHRLGARPEQYQNFVERLHQCANVAKPLRYMSHFGCADELDRATTVEQTELFLSLTDGCEGERSLAASAGLLAWPDSHLDWVRPGIISYGVSPFADKSAQDLGFYPVMTLTSHLIAVRDVKAGESVGYGGNWTSERDTKVGVIAIGYGDGYPRTAPNGTPVFVNGRKVPIAGRVSMDMLTVDLGPDAADKVGDEATLWGKDLPSEEVAEHIGTIAYELVTKLTSRVAMEYVK.

The active-site Proton acceptor; specific for D-alanine is the K34. The residue at position 34 (K34) is an N6-(pyridoxal phosphate)lysine. R129 contributes to the substrate binding site. Y254 serves as the catalytic Proton acceptor; specific for L-alanine. M302 serves as a coordination point for substrate.

It belongs to the alanine racemase family. It depends on pyridoxal 5'-phosphate as a cofactor.

It carries out the reaction L-alanine = D-alanine. Its pathway is amino-acid biosynthesis; D-alanine biosynthesis; D-alanine from L-alanine: step 1/1. Functionally, catalyzes the interconversion of L-alanine and D-alanine. May also act on other amino acids. The sequence is that of Alanine racemase (alr) from Vibrio atlanticus (strain LGP32) (Vibrio splendidus (strain Mel32)).